A 464-amino-acid chain; its full sequence is Type I restriction enzyme EcoKI specificity subunit (464 aa).

Belongs to the type-I restriction system S methylase family. The type I restriction/modification system is composed of three polypeptides R, M and S. The restriction enzyme has stoichiometry R(2)M(2)S(1). The methyltransferase is composed of M(2)S(1). In terms of assembly, (Microbial infection) Interacts with Escherichia phage T7 protein Ocr; this interaction leads to the inhibition of the methyltransferase restriction enzyme M.EcoKI composed of M(2)S(1).

The specificity (S) subunit of a type I restriction enzyme; this subunit dictates DNA sequence specificity. The M and S subunits together form a methyltransferase (MTase) that methylates A-2 on the top and A-3 on the bottom strand of the sequence 5'-AACN(6)GTGC-3'. In the presence of the R subunit the complex can also act as an endonuclease, binding to the same target sequence but cutting the DNA some distance from this site. Whether the DNA is cut or modified depends on the methylation state of the target sequence. When the target site is unmodified, the DNA is cut. When the target site is hemimethylated, the complex acts as a maintenance MTase modifying the DNA so that both strands become methylated. After locating a non-methylated recognition site, the enzyme complex serves as a molecular motor that translocates DNA in an ATP-dependent manner until a collision occurs that triggers cleavage. The polypeptide is Type I restriction enzyme EcoKI specificity subunit (Escherichia coli (strain K12)).